The following is a 473-amino-acid chain: Adenosylhomocysteinase (473 aa).

The substrate site is built by Thr-64, Asp-139, and Glu-199. 200–202 (TTT) is a binding site for NAD(+). Residues Lys-229 and Asp-233 each coordinate substrate. NAD(+)-binding positions include Asn-234, 263 to 268 (GYGDVG), Glu-286, Asn-321, 342 to 344 (IGH), and Asn-387.

The protein belongs to the adenosylhomocysteinase family. Requires NAD(+) as cofactor.

The protein resides in the cytoplasm. It carries out the reaction S-adenosyl-L-homocysteine + H2O = L-homocysteine + adenosine. The protein operates within amino-acid biosynthesis; L-homocysteine biosynthesis; L-homocysteine from S-adenosyl-L-homocysteine: step 1/1. Its function is as follows. May play a key role in the regulation of the intracellular concentration of adenosylhomocysteine. This chain is Adenosylhomocysteinase, found in Paraburkholderia phytofirmans (strain DSM 17436 / LMG 22146 / PsJN) (Burkholderia phytofirmans).